Consider the following 480-residue polypeptide: MQHRPHLLLISLTIMSVCGGSNGLTDQLNNKNLTMPLLPIEFHKENTVTNDWIPEGEEDDDYLDLEKLLSEDDDYIDIIDAVSPTDSEASAGNILQLFQGKSRIQRLNILNAKFAFSLYRALKDQANAFDNIFIAPVGISTAMGMISLGLKGETHEQVHSVLHFRDFVNASSKYEILTIHNLFRKLTHRLFRRNFGYTLRSVNDLYVQKQFPIREDFKAKVREYYFAEAQAADFSDPAFISKANNHILKVTKGLIKEALENVDPATQMMILNCIYFKGTWVNKFPVEMTHNHNFRLNEREVVKVSMMQTKGNFLAANDQELACDVLQLEYVGGISMLIVVPHKLSGMKTLEAQLTPQVVERWQKSMTNRTREVLLPKFKLEKNYNLVEALKSMGVTELFDKNGNMSGISDQGITMDLFKHQGTITVNEEGTQAAAVTTVGFMPLSTQVRFTVDRPFLFLVYEHRTSCLLFMGKVANPVRS.

Residues 1–19 (MQHRPHLLLISLTIMSVCG) form the signal peptide. A glycan (N-linked (GlcNAc...) asparagine) is linked at Asn-32. 2 repeat units span residues 56–66 (GEEDDDYLDLE) and 70–80 (SEDDDYIDIID). The segment at 56-80 (GEEDDDYLDLEKLLSEDDDYIDIID) is 2 X 11 AA approximate repeats, Asp/Glu-rich (acidic) (hirudin-like). A sulfotyrosine mark is found at Tyr-62 and Tyr-75. Asn-169 carries an N-linked (GlcNAc...) asparagine glycan. The interval 173 to 193 (KYEILTIHNLFRKLTHRLFRR) is glycosaminoglycan-binding site. N-linked (GlcNAc...) asparagine glycans are attached at residues Asn-368 and Asn-404.

Belongs to the serpin family. In terms of processing, N-glycosylated; different glycan composition appears to lead to two forms of this protein (56 and 60 kDa).

Its function is as follows. Thrombin inhibitor activated by the glycosaminoglycans, heparin or dermatan sulfate. In the presence of the latter, HC-II becomes the predominant thrombin inhibitor in place of antithrombin III (AT). The chain is Heparin cofactor 2 (SERPIND1) from Oryctolagus cuniculus (Rabbit).